Here is an 83-residue protein sequence, read N- to C-terminus: Mu-theraphotoxin-Hhn2c (83 aa).

An N-terminal signal peptide occupies residues 1–21 (MKASMFLALAGLVLLFVVGYA). The propeptide occupies 22-48 (SESEEKEFPIELLSKIFAVDVFKGEER). 3 disulfide bridges follow: C50/C65, C57/C70, and C64/C77. L81 is modified (leucine amide).

This sequence belongs to the neurotoxin 10 (Hwtx-1) family. 15 (Hntx-3) subfamily. In terms of assembly, monomer. Expressed by the venom gland.

It localises to the secreted. Its function is as follows. Lethal neurotoxin. Selectively blocks tetrodotoxin-sensitive voltage-gated sodium channels (Nav). Does not affect tetrodotoxin-resistant voltage-gated sodium channels or calcium channels. The polypeptide is Mu-theraphotoxin-Hhn2c (Cyriopagopus hainanus (Chinese bird spider)).